The following is an 839-amino-acid chain: Protein translocase subunit SecA (839 aa).

ATP-binding positions include glutamine 85, 103–107 (GEGKT), and aspartate 493. A compositionally biased stretch (basic and acidic residues) spans 780-790 (QIHEQERERAS). The tract at residues 780–839 (QIHEQERERASQRATTAAPQNIQSQQSANTDDLPKVERNEACPCGSGKKFKNCHGRKSFS) is disordered. The segment covering 791-809 (QRATTAAPQNIQSQQSANT) has biased composition (polar residues). Zn(2+) is bound by residues cysteine 821, cysteine 823, cysteine 832, and histidine 833. A compositionally biased stretch (basic residues) spans 827–839 (KKFKNCHGRKSFS).

Belongs to the SecA family. Monomer and homodimer. Part of the essential Sec protein translocation apparatus which comprises SecA, SecYEG and auxiliary proteins SecDF. Other proteins may also be involved. The cofactor is Zn(2+).

The protein localises to the cell membrane. The protein resides in the cytoplasm. The enzyme catalyses ATP + H2O + cellular proteinSide 1 = ADP + phosphate + cellular proteinSide 2.. Functionally, part of the Sec protein translocase complex. Interacts with the SecYEG preprotein conducting channel. Has a central role in coupling the hydrolysis of ATP to the transfer of proteins into and across the cell membrane, serving as an ATP-driven molecular motor driving the stepwise translocation of polypeptide chains across the membrane. This is Protein translocase subunit SecA from Streptococcus pyogenes serotype M3 (strain ATCC BAA-595 / MGAS315).